We begin with the raw amino-acid sequence, 253 residues long: uncharacterized protein (253 aa).

The N-terminal stretch at 1-19 is a signal peptide; the sequence is MRYLKKVTIYISLLILVSG. Residue cysteine 20 is the site of N-palmitoyl cysteine attachment. A lipid anchor (S-diacylglycerol cysteine) is attached at cysteine 20.

This sequence belongs to the staphylococcal tandem lipoprotein family.

It is found in the cell membrane. This is an uncharacterized protein from Staphylococcus epidermidis (strain ATCC 35984 / DSM 28319 / BCRC 17069 / CCUG 31568 / BM 3577 / RP62A).